A 291-amino-acid polypeptide reads, in one-letter code: 33 kDa chaperonin (291 aa).

2 cysteine pairs are disulfide-bonded: cysteine 237–cysteine 239 and cysteine 270–cysteine 273.

The protein belongs to the HSP33 family. Post-translationally, under oxidizing conditions two disulfide bonds are formed involving the reactive cysteines. Under reducing conditions zinc is bound to the reactive cysteines and the protein is inactive.

The protein localises to the cytoplasm. Functionally, redox regulated molecular chaperone. Protects both thermally unfolding and oxidatively damaged proteins from irreversible aggregation. Plays an important role in the bacterial defense system toward oxidative stress. This is 33 kDa chaperonin from Halalkalibacterium halodurans (strain ATCC BAA-125 / DSM 18197 / FERM 7344 / JCM 9153 / C-125) (Bacillus halodurans).